The sequence spans 366 residues: Flagellar P-ring protein (366 aa).

Residues 1-20 (MVIKFLSALILLLVTTAVQA) form the signal peptide.

The protein belongs to the FlgI family. The basal body constitutes a major portion of the flagellar organelle and consists of four rings (L,P,S, and M) mounted on a central rod.

Its subcellular location is the periplasm. It localises to the bacterial flagellum basal body. Functionally, assembles around the rod to form the L-ring and probably protects the motor/basal body from shearing forces during rotation. This is Flagellar P-ring protein from Escherichia coli O6:H1 (strain CFT073 / ATCC 700928 / UPEC).